Consider the following 947-residue polypeptide: Serine-aspartate repeat-containing protein C (947 aa).

Positions 1–50 (MNNKKTATNRKGMIPNRLNKFSIRKYSVGTASILVGTTLIFGLSGHEAKA) are cleaved as a signal peptide. The interval 51 to 164 (AEHTNGELNQ…STTPKTTTIK (114 aa)) is disordered. Positions 51-495 (AEHTNGELNQ…GSSTANGDQK (445 aa)) are ligand binding A region. A compositionally biased stretch (polar residues) spans 56–71 (GELNQSKNETTAPSEN). Residues 72–83 (KTTKKVDSRQLK) show a composition bias toward basic and acidic residues. The segment covering 84 to 155 (DNTQTATADQ…SNLTQAKDVS (72 aa)) has biased composition (polar residues). 2 consecutive CNA-B domains span residues 496–606 (KYNL…YKTP) and 607–717 (KYSL…EEET). The disordered stretch occupies residues 678-927 (TQTGTNTTED…NNSNNGTLFG (250 aa)). Composition is skewed to acidic residues over residues 685–695 (TEDDKDADGGE) and 712–886 (YYEE…DSDS). An LPXTG sorting signal motif is present at residues 910–914 (LPETG). Residues 912-927 (ETGSENNNSNNGTLFG) show a composition bias toward low complexity. A Pentaglycyl murein peptidoglycan amidated threonine modification is found at threonine 913. A propeptide spans 914–947 (GSENNNSNNGTLFGGLFAALGSLLLFGRRKKQNK) (removed by sortase).

The protein belongs to the serine-aspartate repeat-containing protein (SDr) family. In terms of assembly, homodimerizes; via N2-Domain. Interacts with host NRXN1; this interaction mediates bacterial attachment to host cells.

It localises to the secreted. Its subcellular location is the cell wall. Functionally, cell surface-associated calcium-binding protein which plays an important role in adhesion and pathogenesis. Mediates interactions with components of the extracellular matrix such as host NRXN1 to promote bacterial adhesion. This Staphylococcus aureus (strain USA300) protein is Serine-aspartate repeat-containing protein C (sdrC).